The following is a 574-amino-acid chain: Developmental and secondary metabolism regulator veA (574 aa).

Disordered regions lie at residues 1 to 22 (MATR…SRIT), 39 to 60 (ERAR…VDPP), 255 to 500 (RSSD…GAGK), and 513 to 540 (RSYE…YPRR). The Velvet domain occupies 25 to 230 (GKKLTYKLNV…AEQGCRVRIR (206 aa)). The Nuclear localization signal signature appears at 39 to 44 (ERARAC). 2 stretches are compositionally biased toward pro residues: residues 314–323 (RPLPPAPGPA) and 330–341 (PAPPAPPAPPSH). Composition is skewed to polar residues over residues 343–353 (PGYQSHLSFGS), 385–394 (HARNPSTSAE), 406–415 (RMSTERSSYP), and 448–458 (VAQSAAPRSQT). Positions 457–498 (QTPSSSLVPSLPPLKALSGDYPNNLSQSSSSTSQSPSHDLGA) are PEST. Low complexity-rich tracts occupy residues 459-474 (PSSS…KALS) and 482-493 (SQSSSSTSQSPS). Positions 513-525 (RSYEDSFGHDDRP) are enriched in basic and acidic residues.

Belongs to the velvet family. VeA subfamily. As to quaternary structure, component of the heterotrimeric velvet complex composed of laeA, veA and velB; VeA acting as a bridging protein between laeA and velB.

The protein localises to the nucleus. It localises to the cytoplasm. Functionally, component of the velvet transcription factor complex that controls sexual/asexual developmental ratio in response to light, promoting sexual development in the darkness while stimulating asexual sporulation under illumination. The velvet complex hat acts as a global regulator for secondary metabolite gene expression. Controls the expression of the cyclopiazonic acid, aflatrem, and aflatoxin gene clusters. Controls the expression of the sclerotium-specific pigment asparasone A gene cluster. Controls the expression of the aflavarin gene cluster. also controls the production of hydrolases and other extracellular proteins during growth on natural starch-based substrates. Regulates genes involved in the High Osmolarity Glycerol (HOG) signaling pathway. Required for the conidial and sclerotial density-dependent production. This chain is Developmental and secondary metabolism regulator veA, found in Aspergillus flavus (strain ATCC 200026 / FGSC A1120 / IAM 13836 / NRRL 3357 / JCM 12722 / SRRC 167).